The primary structure comprises 205 residues: Ribosome maturation factor RimP (205 aa).

Residues Met-1 to His-12 are compositionally biased toward polar residues. Disordered regions lie at residues Met-1–His-24 and Phe-186–Ala-205.

It belongs to the RimP family.

It localises to the cytoplasm. In terms of biological role, required for maturation of 30S ribosomal subunits. This Pseudarthrobacter chlorophenolicus (strain ATCC 700700 / DSM 12829 / CIP 107037 / JCM 12360 / KCTC 9906 / NCIMB 13794 / A6) (Arthrobacter chlorophenolicus) protein is Ribosome maturation factor RimP.